Here is a 104-residue protein sequence, read N- to C-terminus: Nucleoid-associated protein GAU_1113 (104 aa).

Belongs to the YbaB/EbfC family. Homodimer.

It is found in the cytoplasm. The protein resides in the nucleoid. Binds to DNA and alters its conformation. May be involved in regulation of gene expression, nucleoid organization and DNA protection. The chain is Nucleoid-associated protein GAU_1113 from Gemmatimonas aurantiaca (strain DSM 14586 / JCM 11422 / NBRC 100505 / T-27).